A 240-amino-acid polypeptide reads, in one-letter code: Aquaporin SIP1-1 (240 aa).

2 consecutive transmembrane segments (helical) span residues 13–33 (LMTF…AAII) and 44–64 (APLV…TVIF). Residues 70–72 (NPT) carry the NPA 1 motif. 3 helical membrane passes run 89–109 (SLAI…LAIM), 132–152 (GAIA…LIIL), and 163–183 (FLLA…TGPA). An NPA 2 motif is present at residues 185–187 (NPA). The chain crosses the membrane as a helical span at residues 203 to 223 (DHIYVYWISSFVGALSAALLF).

The protein belongs to the MIP/aquaporin (TC 1.A.8) family. SIP (TC 1.A.8.10) subfamily. In terms of tissue distribution, expressed in roots and above ground. Expressed in elongating regions of the root tips, trichome cells of the rosette leaves, vascular tissues of the flower petals, stigma, stamens (anthers and filaments), pollen and the top and bottom (receptacle) of siliques.

The protein resides in the endoplasmic reticulum membrane. Its function is as follows. Water channel required to facilitate the transport of water across cell membrane. The chain is Aquaporin SIP1-1 (SIP1-1) from Arabidopsis thaliana (Mouse-ear cress).